The sequence spans 148 residues: uncharacterized protein (148 aa).

A helical membrane pass occupies residues 1 to 21 (MLQNYAIVLGMAVAVAIWYFF). The segment at 27 to 61 (APPGPNPPKPDPPKPDPPKMHMPKKKPHWMDPHLT) is disordered.

The protein resides in the host membrane. This is an uncharacterized protein from Frog virus 3 (isolate Goorha) (FV-3).